Here is a 523-residue protein sequence, read N- to C-terminus: Sensory neuron membrane protein 1 (523 aa).

Over 1–10 (MRLARGIKYA) the chain is Cytoplasmic. Residues 11–31 (VIGAGVALFGVLFGWVMFPAI) traverse the membrane as a helical segment. Over 32–458 (LKSQLKKEMA…NQLFIPKRIV (427 aa)) the chain is Extracellular. N-linked (GlcNAc...) asparagine glycosylation is found at Asn-67 and Asn-229. Disulfide bonds link Cys-268-Cys-333, Cys-297-Cys-352, and Cys-335-Cys-341. N-linked (GlcNAc...) asparagine glycosylation occurs at Asn-440. A helical transmembrane segment spans residues 459–479 (SVIRWWLLSFGMLAALGGVIF). The Cytoplasmic segment spans residues 480-523 (HFKDDIMRIAIKGDSSVTKVNPEDGEQKDVSVIGQSHEPPKINM). Residues 499–523 (VNPEDGEQKDVSVIGQSHEPPKINM) are disordered.

The protein belongs to the CD36 family. In terms of tissue distribution, localizes to both male and female antennae but not the leg, wing, gut, head, or thoracic ganglia. Detected throughout the sensory epithelium, associating with both sex-pheromone sensilla and plant-volatile sensilla. Differentially expressed both among different sensilla and different neurons within a given sensillum. Expression coincides with that of several other olfactory-specific proteins that are involved in odor detection.

The protein resides in the cell membrane. Plays an olfactory role that is not restricted to pheromone sensitivity. This chain is Sensory neuron membrane protein 1, found in Manduca sexta (Tobacco hawkmoth).